Here is a 160-residue protein sequence, read N- to C-terminus: Na(+)/H(+) antiporter subunit E1 (160 aa).

4 consecutive transmembrane segments (helical) span residues 1 to 21 (MAIQ…VTGS), 27 to 47 (FILG…VLPG), 49 to 69 (FYLI…IELI), and 101 to 121 (WQIV…VLGI).

Belongs to the CPA3 antiporters (TC 2.A.63) subunit E family. In terms of assembly, may form a heterooligomeric complex that consists of seven subunits: mnhA1, mnhB1, mnhC1, mnhD1, mnhE1, mnhF1 and mnhG1.

The protein localises to the cell membrane. Its function is as follows. Mnh complex is a Na(+)/H(+) antiporter involved in Na(+) excretion. This is Na(+)/H(+) antiporter subunit E1 (mnhE1) from Staphylococcus saprophyticus subsp. saprophyticus (strain ATCC 15305 / DSM 20229 / NCIMB 8711 / NCTC 7292 / S-41).